Here is a 311-residue protein sequence, read N- to C-terminus: Phospholipid phosphatase 3 (311 aa).

Residues Met1–Arg33 are Cytoplasmic-facing. The residue at position 19 (Ser19) is a Phosphoserine. The chain crosses the membrane as a helical span at residues Val34–Ile54. Topologically, residues Glu55–Asp85 are extracellular. Residues Ala86–Tyr106 form a helical membrane-spanning segment. Residues Arg107–Tyr123 lie on the Cytoplasmic side of the membrane. Positions Tyr109 to Tyr110 match the Dityrosine basolateral targeting motif motif. The helical transmembrane segment at Val124 to Phe144 threads the bilayer. Residues Thr145–Lys194 are Extracellular-facing. The segment at Lys149–Pro157 is phosphatase sequence motif I. Asn171 carries an N-linked (GlcNAc...) asparagine glycan. Residues Arg183–Glu185 carry the Integrin-binding motif motif. The chain crosses the membrane as a helical span at residues Ser195–Leu215. Positions Phe197–His200 are phosphatase sequence motif II. Catalysis depends on His200, which acts as the Proton donors. Residues Gln216–Leu226 are Cytoplasmic-facing. A helical membrane pass occupies residues Leu227 to Leu244. The segment at Ser245 to Asp256 is phosphatase sequence motif III. The Extracellular segment spans residues Ser245–Leu258. Catalysis depends on His252, which acts as the Nucleophile. Residues Ala259 to Phe279 traverse the membrane as a helical segment. Residues Ser276–Val311 form a mediates interaction with CTNND1 region. The Cytoplasmic portion of the chain corresponds to Lys280–Val311.

The protein belongs to the PA-phosphatase related phosphoesterase family. In terms of assembly, forms functional homodimers and homooligomers that are not required for substrate recognition and catalytic activity. Can also form heterooligomers with other PLPP2 and PLPP3. Interacts with CTNND1; negatively regulates the PLPP3-mediated stabilization of beta-catenin/CTNNB1. Post-translationally, N-glycosylated. Contains high-mannose oligosaccharides.

Its subcellular location is the cell membrane. It is found in the basolateral cell membrane. The protein resides in the endoplasmic reticulum membrane. The protein localises to the endoplasmic reticulum-Golgi intermediate compartment membrane. It localises to the golgi apparatus membrane. Its subcellular location is the golgi apparatus. It is found in the trans-Golgi network membrane. The protein resides in the membrane raft. It catalyses the reaction a 1,2-diacyl-sn-glycero-3-phosphate + H2O = a 1,2-diacyl-sn-glycerol + phosphate. It carries out the reaction 1,2-dihexadecanoyl-sn-glycero-3-phosphate + H2O = 1,2-dihexadecanoyl-sn-glycerol + phosphate. The catalysed reaction is 1,2-di-(9Z-octadecenoyl)-sn-glycero-3-phosphate + H2O = 1,2-di-(9Z-octadecenoyl)-sn-glycerol + phosphate. The enzyme catalyses a monoacyl-sn-glycero-3-phosphate + H2O = a monoacylglycerol + phosphate. It catalyses the reaction (9Z)-octadecenoyl-sn-glycero-3-phosphate + H2O = (9Z-octadecenoyl)-glycerol + phosphate. It carries out the reaction sphing-4-enine 1-phosphate + H2O = sphing-4-enine + phosphate. The catalysed reaction is an N-acylsphing-4-enine 1-phosphate + H2O = an N-acylsphing-4-enine + phosphate. The enzyme catalyses N-(octanoyl)-sphing-4-enine-1-phosphate + H2O = N-octanoylsphing-4-enine + phosphate. It catalyses the reaction N-(9Z-octadecenoyl)-ethanolamine phosphate + H2O = N-(9Z-octadecenoyl) ethanolamine + phosphate. The protein operates within lipid metabolism; phospholipid metabolism. Magnesium-independent phospholipid phosphatase. Insensitive to N-ethylmaleimide. Inhibited by sphingosine, zinc ions and modestly by propanolol. Magnesium-independent phospholipid phosphatase of the plasma membrane that catalyzes the dephosphorylation of a variety of glycerolipid and sphingolipid phosphate esters including phosphatidate/PA, lysophosphatidate/LPA, diacylglycerol pyrophosphate/DGPP, sphingosine 1-phosphate/S1P and ceramide 1-phosphate/C1P. Also acts on N-oleoyl ethanolamine phosphate/N-(9Z-octadecenoyl)-ethanolamine phosphate, a potential physiological compound. Has both an extracellular and an intracellular phosphatase activity, allowing the hydrolysis and the cellular uptake of these bioactive lipid mediators from the milieu, regulating signal transduction in different cellular processes. Through the dephosphorylation of extracellular sphingosine-1-phosphate and the regulation of its extra- and intracellular availability, plays a role in vascular homeostasis, regulating endothelial cell migration, adhesion, survival, proliferation and the production of pro-inflammatory cytokines. By maintaining the appropriate levels of this lipid in the cerebellum, also ensure its proper development and function. Through its intracellular lipid phosphatase activity may act in early compartments of the secretory pathway, regulating the formation of Golgi to endoplasmic reticulum retrograde transport carriers. In terms of biological role, independently of this phosphatase activity may also function in the Wnt signaling pathway and the stabilization of beta-catenin/CTNNB1, thereby regulating cell proliferation, migration and differentiation in angiogenesis or yet in tumor growth. Also plays a role in integrin-mediated cell-cell adhesion in angiogenesis. The sequence is that of Phospholipid phosphatase 3 from Bos taurus (Bovine).